Consider the following 231-residue polypeptide: Endonuclease NucS (231 aa).

This sequence belongs to the NucS endonuclease family.

It is found in the cytoplasm. Functionally, cleaves both 3' and 5' ssDNA extremities of branched DNA structures. The polypeptide is Endonuclease NucS (Micrococcus luteus (strain ATCC 4698 / DSM 20030 / JCM 1464 / CCM 169 / CCUG 5858 / IAM 1056 / NBRC 3333 / NCIMB 9278 / NCTC 2665 / VKM Ac-2230) (Micrococcus lysodeikticus)).